Consider the following 155-residue polypeptide: Transcriptional repressor NrdR (155 aa).

A zinc finger lies at C3–C34. In terms of domain architecture, ATP-cone spans L49 to S139.

Belongs to the NrdR family. Requires Zn(2+) as cofactor.

Negatively regulates transcription of bacterial ribonucleotide reductase nrd genes and operons by binding to NrdR-boxes. This is Transcriptional repressor NrdR from Lactobacillus delbrueckii subsp. bulgaricus (strain ATCC 11842 / DSM 20081 / BCRC 10696 / JCM 1002 / NBRC 13953 / NCIMB 11778 / NCTC 12712 / WDCM 00102 / Lb 14).